Consider the following 230-residue polypeptide: Sugar fermentation stimulation protein homolog (230 aa).

This sequence belongs to the SfsA family.

The polypeptide is Sugar fermentation stimulation protein homolog (Clostridium botulinum (strain Okra / Type B1)).